The following is a 102-amino-acid chain: MVWHYTNDVALYCRAFRSMPHCLRERQYFMVKDHDLLLKLTGELVSVNINRYKCGYCGACVGVCPKGALELVETWIEVDESTCIKCGICDRICPVGAIEVMK.

4Fe-4S ferredoxin-type domains are found at residues 45 to 73 (VSVNINRYKCGYCGACVGVCPKGALELVE) and 74 to 102 (TWIEVDESTCIKCGICDRICPVGAIEVMK). Residues cysteine 54, cysteine 57, cysteine 60, cysteine 64, cysteine 83, cysteine 86, cysteine 89, and cysteine 93 each contribute to the [4Fe-4S] cluster site.

It depends on [4Fe-4S] cluster as a cofactor.

It participates in membrane lipid metabolism; glycerophospholipid metabolism. Its function is as follows. Ferredoxin that is the specific electron donor for the geranylgeranyl reductase GGR involved in the biosynthesis of archaeal membrane lipids. This Methanosarcina acetivorans (strain ATCC 35395 / DSM 2834 / JCM 12185 / C2A) protein is Ferredoxin.